Here is a 365-residue protein sequence, read N- to C-terminus: tRNA-specific 2-thiouridylase MnmA (365 aa).

ATP-binding positions include 14-21 and Leu40; that span reads AMSGGVDS. Cys108 acts as the Nucleophile in catalysis. Residues Cys108 and Cys204 are joined by a disulfide bond. Gly132 contributes to the ATP binding site. An interaction with tRNA region spans residues 154 to 156; sequence KDQ. Cys204 (cysteine persulfide intermediate) is an active-site residue.

This sequence belongs to the MnmA/TRMU family.

The protein resides in the cytoplasm. It carries out the reaction S-sulfanyl-L-cysteinyl-[protein] + uridine(34) in tRNA + AH2 + ATP = 2-thiouridine(34) in tRNA + L-cysteinyl-[protein] + A + AMP + diphosphate + H(+). Catalyzes the 2-thiolation of uridine at the wobble position (U34) of tRNA, leading to the formation of s(2)U34. The protein is tRNA-specific 2-thiouridylase MnmA of Rickettsia felis (strain ATCC VR-1525 / URRWXCal2) (Rickettsia azadi).